Consider the following 68-residue polypeptide: conotoxin S11.3 (68 aa).

The N-terminal stretch at 1-26 is a signal peptide; sequence MMFRLTSVSCFLLVIVCLNLFQVVLT. Cystine bridges form between cysteine 29–cysteine 43, cysteine 36–cysteine 48, cysteine 42–cysteine 52, and cysteine 47–cysteine 56. Tyrosine 60 is modified (tyrosine amide). Positions 64–68 are excised as a propeptide; sequence ATFQE.

This sequence belongs to the conotoxin I2 superfamily. Expressed by the venom duct.

It is found in the secreted. The chain is conotoxin S11.3 from Conus striatus (Striated cone).